Here is a 270-residue protein sequence, read N- to C-terminus: 3-phenylpropionate-dihydrodiol/cinnamic acid-dihydrodiol dehydrogenase (270 aa).

Residue 10-34 participates in NAD(+) binding; that stretch reads FITGGGSGLGLALVERFIEEGAQVA. Ser143 is a substrate binding site. The active-site Proton acceptor is Tyr156.

This sequence belongs to the short-chain dehydrogenases/reductases (SDR) family.

It catalyses the reaction 3-(cis-5,6-dihydroxycyclohexa-1,3-dien-1-yl)propanoate + NAD(+) = 3-(2,3-dihydroxyphenyl)propanoate + NADH + H(+). It carries out the reaction (2E)-3-(cis-5,6-dihydroxycyclohexa-1,3-dien-1-yl)prop-2-enoate + NAD(+) = (2E)-3-(2,3-dihydroxyphenyl)prop-2-enoate + NADH + H(+). Its pathway is aromatic compound metabolism; 3-phenylpropanoate degradation. Its function is as follows. Converts 3-phenylpropionate-dihydrodiol (PP-dihydrodiol) and cinnamic acid-dihydrodiol (CI-dihydrodiol) into 3-(2,3-dihydroxylphenyl)propanoic acid (DHPP) and 2,3-dihydroxicinnamic acid (DHCI), respectively. This Escherichia coli (strain ATCC 8739 / DSM 1576 / NBRC 3972 / NCIMB 8545 / WDCM 00012 / Crooks) protein is 3-phenylpropionate-dihydrodiol/cinnamic acid-dihydrodiol dehydrogenase.